The following is an 89-amino-acid chain: Small ribosomal subunit protein uS15 (89 aa).

It belongs to the universal ribosomal protein uS15 family. Part of the 30S ribosomal subunit. Forms a bridge to the 50S subunit in the 70S ribosome, contacting the 23S rRNA.

Its function is as follows. One of the primary rRNA binding proteins, it binds directly to 16S rRNA where it helps nucleate assembly of the platform of the 30S subunit by binding and bridging several RNA helices of the 16S rRNA. Functionally, forms an intersubunit bridge (bridge B4) with the 23S rRNA of the 50S subunit in the ribosome. The chain is Small ribosomal subunit protein uS15 from Geobacillus stearothermophilus (Bacillus stearothermophilus).